An 867-amino-acid chain; its full sequence is Nuclear cap-binding protein subunit 1 (867 aa).

Positions 9 to 228 (LLRIGDRCPE…DLWERIQVLS (220 aa)) constitute an MIF4G domain. Residues 752 to 797 (SADGDVPNLRAGDPNVNSSARDPEATTMEIDNENGGDNDSQLNGQN) form a disordered region. Residues 788 to 797 (DNDSQLNGQN) show a composition bias toward polar residues.

The protein belongs to the NCBP1 family. Component of the nuclear cap-binding complex (CBC), a heterodimer composed of ABH1/CBP80 and CBP20 that interacts with m7GpppG-capped RNA.

It is found in the nucleus. It localises to the cytoplasm. Its function is as follows. Component of the cap-binding complex (CBC), which binds cotranscriptionally to the 5'-cap of pre-mRNAs and is involved in various processes such as pre-mRNA splicing and RNA-mediated gene silencing (RNAi) by microRNAs (miRNAs). The CBC complex is involved in miRNA-mediated RNA interference and is required for primary miRNA processing. In the CBC complex, ABH1/CBP80 does not bind directly capped RNAs (m7GpppG-capped RNA) but is required to stabilize the movement of the N-terminal loop of CBP20 and lock the CBC into a high affinity cap-binding state with the cap structure. In Oryza sativa subsp. japonica (Rice), this protein is Nuclear cap-binding protein subunit 1 (ABH1).